The chain runs to 166 residues: Lipoprotein signal peptidase (166 aa).

A run of 4 helical transmembrane segments spans residues 11–31 (VWLW…TLVV), 42–62 (LLPV…SFLS), 67–87 (WQRW…VWWL), and 90–110 (LPAT…GAIG). Active-site residues include D123 and D141. The chain crosses the membrane as a helical span at residues 133–153 (HFPVFNVADCAICIGAALLLF).

The protein belongs to the peptidase A8 family.

Its subcellular location is the cell inner membrane. The catalysed reaction is Release of signal peptides from bacterial membrane prolipoproteins. Hydrolyzes -Xaa-Yaa-Zaa-|-(S,diacylglyceryl)Cys-, in which Xaa is hydrophobic (preferably Leu), and Yaa (Ala or Ser) and Zaa (Gly or Ala) have small, neutral side chains.. It functions in the pathway protein modification; lipoprotein biosynthesis (signal peptide cleavage). In terms of biological role, this protein specifically catalyzes the removal of signal peptides from prolipoproteins. This Pseudoalteromonas translucida (strain TAC 125) protein is Lipoprotein signal peptidase.